The chain runs to 340 residues: DNA repair protein RAD51 homolog A (340 aa).

The segment covering 1 to 14 (MSSAAQQQQKAAAA) has biased composition (low complexity). Residues 1–21 (MSSAAQQQQKAAAAEQEEVEH) are disordered. Residues 49–78 (TVEAVAYTPRKDLLQIKGISEAKADKIIEA) enclose the HhH domain. 128–135 (GEFRSGKT) contacts ATP.

Belongs to the RecA family. RAD51 subfamily. Self-associates and may interact with XRCC3 homolog. As to expression, highly expressed in mitotic and meiotic tissues, but low levels in differentiated tissues.

The protein localises to the nucleus. In terms of biological role, binds to single and double-stranded DNA and exhibits DNA-dependent ATPase activity. Unwinds duplex DNA. Component of the meiotic recombination pathway. Seems to play a role in mediating chromosome homology search, chromosome pairing and synapsis at early stages and probably chromosome crossing-over at later stages in meiosis. Probably is involved in the repair of meiotic double strand breaks (DBSs) and in homologous recombination. The polypeptide is DNA repair protein RAD51 homolog A (RAD51A) (Zea mays (Maize)).